The chain runs to 710 residues: Subtilisin-like protease SBT4.8 (710 aa).

Positions Met-1–Ala-23 are cleaved as a signal peptide. A propeptide spans Ile-24–Gln-111 (activation peptide). One can recognise an Inhibitor I9 domain in the interval Val-33 to Leu-110. A Peptidase S8 domain is found at Ser-115–Ile-559. Asp-143 functions as the Charge relay system in the catalytic mechanism. An N-linked (GlcNAc...) asparagine glycan is attached at Asn-174. The active-site Charge relay system is the His-198. N-linked (GlcNAc...) asparagine glycans are attached at residues Asn-221, Asn-364, and Asn-419. Residues Lys-354–Leu-414 enclose the PA domain. The active-site Charge relay system is Ser-498. Residues Asn-535, Asn-568, Asn-580, Asn-618, and Asn-636 are each glycosylated (N-linked (GlcNAc...) asparagine).

Belongs to the peptidase S8 family. In terms of processing, the C-terminal propeptide is autocleaved.

It is found in the secreted. This Arabidopsis thaliana (Mouse-ear cress) protein is Subtilisin-like protease SBT4.8.